The following is a 487-amino-acid chain: MMHFKSGLELTELQNMTVPEDDNISNDSNDFTEVENGQINSKFISDRESRRSLTNSHLEKKKCDEYIPGTTSLGMSVFNLSNAIMGSGILGLAFALANTGILLFLVLLTSVTLLSIYSINLLLICSKETGCMVYEKLGEQVFGTTGKFVIFGATSLQNTGAMLSYLFIVKNELPSAIKFLMGKEETFSAWYVDGRVLVVIVTFGIILPLCLLKNLGYLGYTSGFSLSCMVFFLIVVIYKKFQIPCIVPELNSTISANSTNADTCTPKYVTLNSKTVYALPTIAFAFVCHPSVLPIYSELKDRSQKKMQMVSNISFFAMFVMYFLTAIFGYLTFYDNVQSDLLHKYQGKDDILILTVRLAVIVAVILTVPVLFFTVRSSLFELAKKTKFNLCRHTVVTCILLVVINLLVISIPSMKDIFGVVGVTSANMLIFILPSSLYLKITDQDGDKGTQRIWAALFLGLGVLFSLVSIPLVIYDWACSSSSDEGH.

Topologically, residues 1-74 are cytoplasmic; that stretch reads MMHFKSGLEL…EYIPGTTSLG (74 aa). Serine 6 is subject to Phosphoserine. Threonine 11 is subject to Phosphothreonine. Phosphoserine is present on residues serine 25, serine 28, serine 49, and serine 52. Threonine 54 bears the Phosphothreonine mark. Serine 56 is subject to Phosphoserine. The chain crosses the membrane as a helical span at residues 75–97; it reads MSVFNLSNAIMGSGILGLAFALA. The Extracellular portion of the chain corresponds to 98-112; it reads NTGILLFLVLLTSVT. A helical membrane pass occupies residues 113 to 133; the sequence is LLSIYSINLLLICSKETGCMV. The Cytoplasmic segment spans residues 134–147; the sequence is YEKLGEQVFGTTGK. The chain crosses the membrane as a helical span at residues 148–168; sequence FVIFGATSLQNTGAMLSYLFI. The Extracellular portion of the chain corresponds to 169–188; the sequence is VKNELPSAIKFLMGKEETFS. The helical transmembrane segment at 189 to 211 threads the bilayer; it reads AWYVDGRVLVVIVTFGIILPLCL. Residues 212–216 lie on the Cytoplasmic side of the membrane; that stretch reads LKNLG. A helical membrane pass occupies residues 217–237; it reads YLGYTSGFSLSCMVFFLIVVI. Over 238-275 the chain is Extracellular; that stretch reads YKKFQIPCIVPELNSTISANSTNADTCTPKYVTLNSKT. Residues cysteine 245 and cysteine 264 are joined by a disulfide bond. N-linked (GlcNAc...) asparagine glycosylation is found at asparagine 251 and asparagine 257. A helical transmembrane segment spans residues 276–296; that stretch reads VYALPTIAFAFVCHPSVLPIY. Over 297–312 the chain is Cytoplasmic; the sequence is SELKDRSQKKMQMVSN. The chain crosses the membrane as a helical span at residues 313–333; sequence ISFFAMFVMYFLTAIFGYLTF. Residues 334-350 lie on the Extracellular side of the membrane; that stretch reads YDNVQSDLLHKYQGKDD. A helical membrane pass occupies residues 351–371; sequence ILILTVRLAVIVAVILTVPVL. Residues 372–393 lie on the Cytoplasmic side of the membrane; it reads FFTVRSSLFELAKKTKFNLCRH. The chain crosses the membrane as a helical span at residues 394-414; that stretch reads TVVTCILLVVINLLVISIPSM. Residues 415 to 416 are Extracellular-facing; the sequence is KD. The helical transmembrane segment at 417 to 437 threads the bilayer; sequence IFGVVGVTSANMLIFILPSSL. The Cytoplasmic portion of the chain corresponds to 438–452; sequence YLKITDQDGDKGTQR. A helical transmembrane segment spans residues 453-473; sequence IWAALFLGLGVLFSLVSIPLV. The Extracellular segment spans residues 474–487; the sequence is IYDWACSSSSDEGH.

This sequence belongs to the amino acid/polyamine transporter 2 family. Post-translationally, N-glycosylation plays an important role in the L-glutamine transport.

The protein localises to the cell membrane. The enzyme catalyses L-glutamine(in) + Na(+)(in) = L-glutamine(out) + Na(+)(out). The catalysed reaction is L-alanine(in) + Na(+)(in) = L-alanine(out) + Na(+)(out). It catalyses the reaction L-asparagine(in) + Na(+)(in) = L-asparagine(out) + Na(+)(out). It carries out the reaction L-histidine(in) + Na(+)(in) = L-histidine(out) + Na(+)(out). The enzyme catalyses L-serine(in) + Na(+)(in) = L-serine(out) + Na(+)(out). The catalysed reaction is L-cysteine(in) + Na(+)(in) = L-cysteine(out) + Na(+)(out). It catalyses the reaction L-methionine(in) + Na(+)(in) = L-methionine(out) + Na(+)(out). It carries out the reaction glycine(in) + Na(+)(in) = glycine(out) + Na(+)(out). The enzyme catalyses L-threonine(in) + Na(+)(in) = L-threonine(out) + Na(+)(out). The catalysed reaction is L-proline(in) + Na(+)(in) = L-proline(out) + Na(+)(out). With respect to regulation, inhibited by alpha-(methylamino)isobutyric acid (MeAIB). Inhibited by lithium, potassium, choline ions, N-methylglucamine. The pH dependence has an allosteric effect on the transport. Its function is as follows. Symporter that cotransports short-chain neutral amino acids and sodium ions from the extraccellular to the intracellular side of the cell membrane. The transport is elctrogenic, pH dependent and driven by the Na(+) electrochemical gradient. Participates in the astroglia-derived glutamine transport into GABAergic interneurons for neurotransmitter GABA de novo synthesis. May also contributes to amino acid transport in placental trophoblast. Regulates synaptic plasticity. This is Sodium-coupled neutral amino acid symporter 1 from Pongo abelii (Sumatran orangutan).